The primary structure comprises 456 residues: Transcription factor bHLH62 (456 aa).

A compositionally biased stretch (polar residues) spans R159 to P185. The tract at residues R159 to D254 is disordered. The span at K223–D254 shows a compositional bias: basic and acidic residues. Residues Q264 to L314 enclose the bHLH domain.

In terms of assembly, homodimer. In terms of tissue distribution, expressed constitutively in roots, leaves, stems, and flowers.

It is found in the nucleus. The sequence is that of Transcription factor bHLH62 (BHLH62) from Arabidopsis thaliana (Mouse-ear cress).